The primary structure comprises 254 residues: Alcohol dehydrogenase 2 (254 aa).

10–33 (FVAGLGGIGFDTSREIVKSGPKNL) is a binding site for NAD(+). Residue S138 participates in substrate binding. The active-site Proton acceptor is Y151.

The protein belongs to the short-chain dehydrogenases/reductases (SDR) family. Homodimer.

It carries out the reaction a primary alcohol + NAD(+) = an aldehyde + NADH + H(+). The catalysed reaction is a secondary alcohol + NAD(+) = a ketone + NADH + H(+). This Drosophila buzzatii (Fruit fly) protein is Alcohol dehydrogenase 2 (Adh2).